A 342-amino-acid chain; its full sequence is uncharacterized protein (342 aa).

The N-terminal stretch at Met1 to Ala18 is a signal peptide.

This is an uncharacterized protein from Methanocaldococcus jannaschii (strain ATCC 43067 / DSM 2661 / JAL-1 / JCM 10045 / NBRC 100440) (Methanococcus jannaschii).